A 200-amino-acid polypeptide reads, in one-letter code: Probable molybdenum cofactor guanylyltransferase (200 aa).

GTP contacts are provided by residues 9–11 (LAG), K21, D69, and D100. Residue D100 coordinates Mg(2+).

It belongs to the MobA family. The cofactor is Mg(2+).

The protein resides in the cytoplasm. The enzyme catalyses Mo-molybdopterin + GTP + H(+) = Mo-molybdopterin guanine dinucleotide + diphosphate. Transfers a GMP moiety from GTP to Mo-molybdopterin (Mo-MPT) cofactor (Moco or molybdenum cofactor) to form Mo-molybdopterin guanine dinucleotide (Mo-MGD) cofactor. The polypeptide is Probable molybdenum cofactor guanylyltransferase (Bacillus cereus (strain AH820)).